Consider the following 273-residue polypeptide: Dermonecrotic toxin LsaSicTox-alphaIB1aii (273 aa).

H5 is an active-site residue. 2 residues coordinate Mg(2+): E25 and D27. H41 functions as the Nucleophile in the catalytic mechanism. 2 disulfides stabilise this stretch: C45–C51 and C47–C190. D85 is a binding site for Mg(2+).

It belongs to the arthropod phospholipase D family. Class II subfamily. Mg(2+) serves as cofactor. In terms of tissue distribution, expressed by the venom gland.

Its subcellular location is the secreted. The enzyme catalyses an N-(acyl)-sphingosylphosphocholine = an N-(acyl)-sphingosyl-1,3-cyclic phosphate + choline. It carries out the reaction an N-(acyl)-sphingosylphosphoethanolamine = an N-(acyl)-sphingosyl-1,3-cyclic phosphate + ethanolamine. The catalysed reaction is a 1-acyl-sn-glycero-3-phosphocholine = a 1-acyl-sn-glycero-2,3-cyclic phosphate + choline. It catalyses the reaction a 1-acyl-sn-glycero-3-phosphoethanolamine = a 1-acyl-sn-glycero-2,3-cyclic phosphate + ethanolamine. Its function is as follows. Dermonecrotic toxins cleave the phosphodiester linkage between the phosphate and headgroup of certain phospholipids (sphingolipid and lysolipid substrates), forming an alcohol (often choline) and a cyclic phosphate. This toxin acts on sphingomyelin (SM). It may also act on ceramide phosphoethanolamine (CPE), lysophosphatidylcholine (LPC) and lysophosphatidylethanolamine (LPE), but not on lysophosphatidylserine (LPS), and lysophosphatidylglycerol (LPG). It acts by transphosphatidylation, releasing exclusively cyclic phosphate products as second products. Induces dermonecrosis, hemolysis, increased vascular permeability, edema, inflammatory response, and platelet aggregation. This is Dermonecrotic toxin LsaSicTox-alphaIB1aii from Loxosceles sabina (Tucson recluse spider).